The primary structure comprises 228 residues: tRNA (guanine-N(1)-)-methyltransferase (228 aa).

S-adenosyl-L-methionine contacts are provided by residues glycine 111 and 130-135; that span reads IGDFVL.

It belongs to the RNA methyltransferase TrmD family. Homodimer.

The protein resides in the cytoplasm. It catalyses the reaction guanosine(37) in tRNA + S-adenosyl-L-methionine = N(1)-methylguanosine(37) in tRNA + S-adenosyl-L-homocysteine + H(+). Specifically methylates guanosine-37 in various tRNAs. This is tRNA (guanine-N(1)-)-methyltransferase from Ureaplasma parvum serovar 3 (strain ATCC 27815 / 27 / NCTC 11736).